Here is a 456-residue protein sequence, read N- to C-terminus: Bifunctional protein GlmU (456 aa).

Residues 1–228 form a pyrophosphorylase region; it reads MPQNTLNIVI…SYLAAGVNNK (228 aa). Residues 11 to 14, Lys-25, Gln-75, 80 to 81, 102 to 104, Gly-138, Glu-153, Asn-168, and Asn-226 contribute to the UDP-N-acetyl-alpha-D-glucosamine site; these read LAAG, GT, and YGD. Asp-104 contributes to the Mg(2+) binding site. Asn-226 is a Mg(2+) binding site. The tract at residues 229-249 is linker; that stretch reads LQLAELERIFQTEQAQELLKA. Residues 250 to 456 are N-acetyltransferase; the sequence is GVTLSDPARF…GWVRPEKDKQ (207 aa). The UDP-N-acetyl-alpha-D-glucosamine site is built by Arg-332 and Lys-350. His-362 acts as the Proton acceptor in catalysis. 2 residues coordinate UDP-N-acetyl-alpha-D-glucosamine: Tyr-365 and Asn-376. Residues Ala-379, 385 to 386, Ser-404, Ala-422, and Arg-439 each bind acetyl-CoA; that span reads NY.

This sequence in the N-terminal section; belongs to the N-acetylglucosamine-1-phosphate uridyltransferase family. The protein in the C-terminal section; belongs to the transferase hexapeptide repeat family. As to quaternary structure, homotrimer. Mg(2+) is required as a cofactor.

The protein resides in the cytoplasm. The enzyme catalyses alpha-D-glucosamine 1-phosphate + acetyl-CoA = N-acetyl-alpha-D-glucosamine 1-phosphate + CoA + H(+). It carries out the reaction N-acetyl-alpha-D-glucosamine 1-phosphate + UTP + H(+) = UDP-N-acetyl-alpha-D-glucosamine + diphosphate. Its pathway is nucleotide-sugar biosynthesis; UDP-N-acetyl-alpha-D-glucosamine biosynthesis; N-acetyl-alpha-D-glucosamine 1-phosphate from alpha-D-glucosamine 6-phosphate (route II): step 2/2. It functions in the pathway nucleotide-sugar biosynthesis; UDP-N-acetyl-alpha-D-glucosamine biosynthesis; UDP-N-acetyl-alpha-D-glucosamine from N-acetyl-alpha-D-glucosamine 1-phosphate: step 1/1. It participates in bacterial outer membrane biogenesis; LPS lipid A biosynthesis. Catalyzes the last two sequential reactions in the de novo biosynthetic pathway for UDP-N-acetylglucosamine (UDP-GlcNAc). The C-terminal domain catalyzes the transfer of acetyl group from acetyl coenzyme A to glucosamine-1-phosphate (GlcN-1-P) to produce N-acetylglucosamine-1-phosphate (GlcNAc-1-P), which is converted into UDP-GlcNAc by the transfer of uridine 5-monophosphate (from uridine 5-triphosphate), a reaction catalyzed by the N-terminal domain. This is Bifunctional protein GlmU from Neisseria meningitidis serogroup C / serotype 2a (strain ATCC 700532 / DSM 15464 / FAM18).